Consider the following 272-residue polypeptide: Acyl-[acyl-carrier-protein]--UDP-N-acetylglucosamine O-acyltransferase (272 aa).

This sequence belongs to the transferase hexapeptide repeat family. LpxA subfamily. In terms of assembly, homotrimer.

The protein resides in the cytoplasm. It catalyses the reaction a (3R)-hydroxyacyl-[ACP] + UDP-N-acetyl-alpha-D-glucosamine = a UDP-3-O-[(3R)-3-hydroxyacyl]-N-acetyl-alpha-D-glucosamine + holo-[ACP]. It functions in the pathway glycolipid biosynthesis; lipid IV(A) biosynthesis; lipid IV(A) from (3R)-3-hydroxytetradecanoyl-[acyl-carrier-protein] and UDP-N-acetyl-alpha-D-glucosamine: step 1/6. Involved in the biosynthesis of lipid A, a phosphorylated glycolipid that anchors the lipopolysaccharide to the outer membrane of the cell. This chain is Acyl-[acyl-carrier-protein]--UDP-N-acetylglucosamine O-acyltransferase, found in Rhizobium johnstonii (strain DSM 114642 / LMG 32736 / 3841) (Rhizobium leguminosarum bv. viciae).